We begin with the raw amino-acid sequence, 434 residues long: Asparagine--tRNA ligase (434 aa).

It belongs to the class-II aminoacyl-tRNA synthetase family. In terms of assembly, homodimer.

The protein resides in the cytoplasm. It carries out the reaction tRNA(Asn) + L-asparagine + ATP = L-asparaginyl-tRNA(Asn) + AMP + diphosphate + H(+). This chain is Asparagine--tRNA ligase, found in Oenococcus oeni (strain ATCC BAA-331 / PSU-1).